The chain runs to 131 residues: Ribosome-binding factor A (131 aa).

It belongs to the RbfA family. In terms of assembly, monomer. Binds 30S ribosomal subunits, but not 50S ribosomal subunits or 70S ribosomes.

It localises to the cytoplasm. In terms of biological role, one of several proteins that assist in the late maturation steps of the functional core of the 30S ribosomal subunit. Associates with free 30S ribosomal subunits (but not with 30S subunits that are part of 70S ribosomes or polysomes). Required for efficient processing of 16S rRNA. May interact with the 5'-terminal helix region of 16S rRNA. This chain is Ribosome-binding factor A, found in Thermotoga petrophila (strain ATCC BAA-488 / DSM 13995 / JCM 10881 / RKU-1).